A 149-amino-acid polypeptide reads, in one-letter code: Protein K7 (149 aa).

This sequence belongs to the orthopoxvirus OPG044 family. Interacts with DDX3; this interaction inhibits DDX3 and suppresses DDX3-mediated IFN-beta promoter induction. Interacts with TRAF6 and IRAK2; these interactions suppress TLR-dependent NF-KappaB activation.

The protein resides in the host cytoplasm. Its function is as follows. Virulence factor that affects the acute immune response to infection. Bcl-2-like protein which, through its interaction with the DEAD box RNA helicase DDX3X/DDX3, prevents TBK1/IKKepsilon-mediated IRF3 activation. Contributes to virulence by binding to the host TRAF6 and IRAK2 and preventing host NF-kappa-B activation. This is Protein K7 (OPG044) from Homo sapiens (Human).